Consider the following 308-residue polypeptide: Ava biosynthesis cluster protein O (308 aa).

The protein operates within secondary metabolite biosynthesis. Its function is as follows. Part of the cluster that mediates the biosynthesis of a highly modified cyclo-arginine-tryptophan dipeptide (cRW). The first step of the pathway is perfornmed by the arginine-containing cyclodipeptide synthase (RCPDS) avaA that acts as the scaffold-generating enzyme and is responsible for formation of the cyclo-Arg-Trp (cRW) diketopiperazine. AvaB then acts as a multifunctional flavoenzyme that is responsible for generating the cyclo-Arg-formylkynurenine DKP, which can be deformylated by avaC. AvaB then further catalyzes an additional N-oxidation followed by cyclization and dehydration. The next step is an N-acetylation of the guanidine group catalyzed by the arginine N-acetyltransferase avaD. The roles of the additional enzymes identified within the ava cluster still have to be determined. The sequence is that of Ava biosynthesis cluster protein O from Aspergillus versicolor.